A 492-amino-acid polypeptide reads, in one-letter code: Probable malate:quinone oxidoreductase (492 aa).

The protein belongs to the MQO family. It depends on FAD as a cofactor.

It catalyses the reaction (S)-malate + a quinone = a quinol + oxaloacetate. Its pathway is carbohydrate metabolism; tricarboxylic acid cycle; oxaloacetate from (S)-malate (quinone route): step 1/1. This Methylobacillus flagellatus (strain ATCC 51484 / DSM 6875 / VKM B-1610 / KT) protein is Probable malate:quinone oxidoreductase.